We begin with the raw amino-acid sequence, 155 residues long: Small ribosomal subunit protein uS7 (155 aa).

It belongs to the universal ribosomal protein uS7 family. Part of the 30S ribosomal subunit. Contacts proteins S9 and S11.

One of the primary rRNA binding proteins, it binds directly to 16S rRNA where it nucleates assembly of the head domain of the 30S subunit. Is located at the subunit interface close to the decoding center, probably blocks exit of the E-site tRNA. This chain is Small ribosomal subunit protein uS7, found in Thermotoga neapolitana (strain ATCC 49049 / DSM 4359 / NBRC 107923 / NS-E).